We begin with the raw amino-acid sequence, 142 residues long: General odorant-binding protein 99a (142 aa).

A signal peptide spans 1 to 16; that stretch reads MKVFVAICVLIGLASA. Intrachain disulfides connect Cys33-Cys64, Cys60-Cys116, and Cys105-Cys125.

This sequence belongs to the PBP/GOBP family. Expressed in larval chemosensory organ. Specifically expressed exclusively in a subset of chemosensory sensilla on the third antennal segment.

It localises to the secreted. In terms of biological role, present in the aqueous fluid surrounding olfactory sensory dendrites and are thought to aid in the capture and transport of hydrophobic odorants into and through this fluid. The sequence is that of General odorant-binding protein 99a (Obp99a) from Drosophila melanogaster (Fruit fly).